A 90-amino-acid chain; its full sequence is Small ribosomal subunit protein uS15c (90 aa).

The protein belongs to the universal ribosomal protein uS15 family. In terms of assembly, part of the 30S ribosomal subunit.

It localises to the plastid. It is found in the chloroplast. The sequence is that of Small ribosomal subunit protein uS15c (rps15) from Secale cereale (Rye).